The chain runs to 528 residues: Chaperonin GroEL, chloroplastic (528 aa).

ATP-binding positions include 29 to 32 (TLGP), 86 to 90 (DGTTT), glycine 415, 481 to 483 (NAA), and aspartate 497.

It belongs to the chaperonin (HSP60) family. In terms of assembly, forms a cylinder of 14 subunits composed of two heptameric rings stacked back-to-back. Interacts with the co-chaperonin GroES.

The protein localises to the plastid. It is found in the chloroplast. It catalyses the reaction ATP + H2O + a folded polypeptide = ADP + phosphate + an unfolded polypeptide.. In terms of biological role, together with its co-chaperonin GroES, plays an essential role in assisting protein folding. The GroEL-GroES system forms a nano-cage that allows encapsulation of the non-native substrate proteins and provides a physical environment optimized to promote and accelerate protein folding. The protein is Chaperonin GroEL, chloroplastic of Trieres chinensis (Marine centric diatom).